A 363-amino-acid chain; its full sequence is Putative dipeptidase YkvY (363 aa).

Positions 222, 233, 297, 326, and 340 each coordinate Mn(2+).

The protein belongs to the peptidase M24B family. The cofactor is Mn(2+).

This Bacillus subtilis (strain 168) protein is Putative dipeptidase YkvY (ykvY).